The chain runs to 409 residues: CUB domain-containing protein (409 aa).

The first 18 residues, 1–18 (MFLFSLTVLSALVLITES), serve as a signal peptide directing secretion. The span at 154 to 229 (TEASTTAQET…TTAPTTAPAP (76 aa)) shows a compositional bias: low complexity. Residues 154 to 230 (TEASTTAQET…TAPTTAPAPI (77 aa)) are disordered. Cysteines 232 and 257 form a disulfide. The CUB domain occupies 232–338 (CGGVLRGRGT…QEYVDYYYYD (107 aa)). Positions 389 to 409 (VQGAADSESEASASSESSDED) are disordered. A compositionally biased stretch (low complexity) spans 392–409 (AADSESEASASSESSDED).

Component of the acid-insoluble and acid-soluble organic matrix of the aragonitic skeleton (at protein level).

Its subcellular location is the secreted. The sequence is that of CUB domain-containing protein from Acropora millepora (Staghorn coral).